A 489-amino-acid polypeptide reads, in one-letter code: DNA-directed RNA polymerase subunit beta' C-terminal section (489 aa).

Mg(2+) is bound by residues Asp-208, Asp-210, and Asp-212.

It belongs to the RNA polymerase beta' chain family. RpoC1 subfamily. In terms of assembly, in plastids the minimal PEP RNA polymerase catalytic core is composed of four subunits: alpha, beta, beta', and beta''. When a (nuclear-encoded) sigma factor is associated with the core the holoenzyme is formed, which can initiate transcription. Mg(2+) is required as a cofactor.

It is found in the plastid. The protein localises to the chloroplast. The catalysed reaction is RNA(n) + a ribonucleoside 5'-triphosphate = RNA(n+1) + diphosphate. Functionally, DNA-dependent RNA polymerase catalyzes the transcription of DNA into RNA using the four ribonucleoside triphosphates as substrates. The protein is DNA-directed RNA polymerase subunit beta' C-terminal section (rpoC1B) of Chlamydomonas reinhardtii (Chlamydomonas smithii).